We begin with the raw amino-acid sequence, 132 residues long: UPF0299 membrane protein YohJ (132 aa).

A run of 4 helical transmembrane segments spans residues 7–27 (IIWQYLRAFVLIYACLYAGIF), 31–51 (LLPVTIPGSIIGMLILFVLLA), 63–83 (GCYVLIRYMALLFVPIGVGVM), and 93–113 (FGPVVVSCAVSTLVVFLVVSW).

The protein belongs to the UPF0299 family.

Its subcellular location is the cell inner membrane. The polypeptide is UPF0299 membrane protein YohJ (Shigella boydii serotype 4 (strain Sb227)).